Here is a 235-residue protein sequence, read N- to C-terminus: Aspartate/glutamate leucyltransferase (235 aa).

Belongs to the R-transferase family. Bpt subfamily.

The protein localises to the cytoplasm. It carries out the reaction N-terminal L-glutamyl-[protein] + L-leucyl-tRNA(Leu) = N-terminal L-leucyl-L-glutamyl-[protein] + tRNA(Leu) + H(+). The enzyme catalyses N-terminal L-aspartyl-[protein] + L-leucyl-tRNA(Leu) = N-terminal L-leucyl-L-aspartyl-[protein] + tRNA(Leu) + H(+). Its function is as follows. Functions in the N-end rule pathway of protein degradation where it conjugates Leu from its aminoacyl-tRNA to the N-termini of proteins containing an N-terminal aspartate or glutamate. The sequence is that of Aspartate/glutamate leucyltransferase from Pseudomonas paraeruginosa (strain DSM 24068 / PA7) (Pseudomonas aeruginosa (strain PA7)).